Reading from the N-terminus, the 345-residue chain is UPF0324 membrane protein RB0971 (345 aa).

10 consecutive transmembrane segments (helical) span residues 13–32 (SLSVVLSTYGPGLLVTAAVA), 42–61 (YGAPAMLMALLLGIAFHFLA), 93–115 (LLIGLGGGTILLLVSAIVATILF), 130–152 (ALLTSGAVAICGASAAMAIAAVL), 161–183 (NLIFTVLSVTVLSTLAMIGYPIV), 193–215 (ATGIFFGGTIHDVAQVVGAGFSV), 228–247 (LIRVTMLAPVVLIFSLVLRS), 262–284 (VPGFVLAFLVLAGFNSAGLVPVL), 291–310 (AISRWALLAGIVAVGMKTSL), and 320–342 (AVALVVAETLFIAVFILAGMYYL).

The protein belongs to the UPF0324 family.

The protein resides in the cell membrane. This chain is UPF0324 membrane protein RB0971, found in Rhizobium meliloti (strain 1021) (Ensifer meliloti).